The primary structure comprises 401 residues: Enolase (401 aa).

A (2R)-2-phosphoglycerate-binding site is contributed by Gln-154. The active-site Proton donor is the Glu-197. Positions 233, 274, and 301 each coordinate Mg(2+). (2R)-2-phosphoglycerate is bound by residues Lys-326, Arg-355, Ser-356, and Lys-377. Lys-326 functions as the Proton acceptor in the catalytic mechanism.

This sequence belongs to the enolase family. Requires Mg(2+) as cofactor.

The protein localises to the cytoplasm. It localises to the secreted. The protein resides in the cell surface. The catalysed reaction is (2R)-2-phosphoglycerate = phosphoenolpyruvate + H2O. The protein operates within carbohydrate degradation; glycolysis; pyruvate from D-glyceraldehyde 3-phosphate: step 4/5. Catalyzes the reversible conversion of 2-phosphoglycerate (2-PG) into phosphoenolpyruvate (PEP). It is essential for the degradation of carbohydrates via glycolysis. In Thermoplasma acidophilum (strain ATCC 25905 / DSM 1728 / JCM 9062 / NBRC 15155 / AMRC-C165), this protein is Enolase.